We begin with the raw amino-acid sequence, 381 residues long: Odorant receptor 46a, isoform A (381 aa).

The Cytoplasmic segment spans residues 1-37 (MSKGVEIFYKGQKAFLNILSLWPQIERRWRIIHQVNY). Residues 38–58 (VHVIVFWVLLFDLLLVLHVMA) form a helical membrane-spanning segment. N59 carries an N-linked (GlcNAc...) asparagine glycan. The Extracellular segment spans residues 59–65 (NLSYMSE). Residues 66 to 86 (VVKAIFILATSAGHTTKLLSI) form a helical membrane-spanning segment. Over 87 to 127 (KANNVQMEELFRRLDNEEFRPRGANEELIFAAACERSRKLR) the chain is Cytoplasmic. Residues 128–148 (DFYGALSFAALSMILIPQFAL) form a helical membrane-spanning segment. Residues 149 to 170 (DWSHLPLKTYNPLGENTGSPAY) are Extracellular-facing. Residues 171–191 (WLLYCYQCLALSVSCITNIGF) form a helical membrane-spanning segment. Topologically, residues 192 to 255 (DSLCSSLFIF…KTVERLLCKP (64 aa)) are cytoplasmic. Residues 256-276 (ISVQIFCSVLVLTANFYAIAV) traverse the membrane as a helical segment. Over 277 to 287 (LSDERLELFKY) the chain is Extracellular. A helical membrane pass occupies residues 288–308 (VTYQACMLIQIFILCYYAGEV). Over 309-355 (TQRSLDLPHELYKTSWVDWDYRSRRIALLFMQRLHSTLRIRTLNPSL) the chain is Cytoplasmic. A helical membrane pass occupies residues 356 to 376 (GFDLMLFSSIVNCSYSYFALL). The Extracellular portion of the chain corresponds to 377-381 (KRVNS).

The protein belongs to the insect chemoreceptor superfamily. Heteromeric odorant receptor channel (TC 1.A.69) family. Or2a subfamily. In terms of assembly, interacts with Orco. Complexes exist early in the endomembrane system in olfactory sensory neurons (OSNs), coupling these complexes to the conserved ciliary trafficking pathway. As to expression, isoform A is expressed in a subset of 17 olfactory receptor neurons in the maxillary palp.

The protein resides in the cell membrane. Its function is as follows. Odorant receptor which mediates acceptance or avoidance behavior, depending on its substrates. The odorant receptor repertoire encodes a large collection of odor stimuli that vary widely in identity, intensity, and duration. May form a complex with Orco to form odorant-sensing units, providing sensitive and prolonged odorant signaling and calcium permeability. The polypeptide is Odorant receptor 46a, isoform A (Or46a) (Drosophila melanogaster (Fruit fly)).